The sequence spans 270 residues: Orotidine 5'-phosphate decarboxylase (270 aa).

Residues D41, 63–65, 95–104, Y221, and R239 contribute to the substrate site; these read KTH and DRKFADIGNT. K97 (proton donor) is an active-site residue.

The protein belongs to the OMP decarboxylase family.

It carries out the reaction orotidine 5'-phosphate + H(+) = UMP + CO2. Its pathway is pyrimidine metabolism; UMP biosynthesis via de novo pathway; UMP from orotate: step 2/2. The polypeptide is Orotidine 5'-phosphate decarboxylase (URA3) (Candida boidinii (Yeast)).